A 135-amino-acid chain; its full sequence is Peptidyl-prolyl cis-trans isomerase FPR2 (135 aa).

Residues 1 to 17 (MMFNIYLFVTFFSTILA) form the signal peptide. The PPIase FKBP-type domain occupies 43–132 (GDKVKVHYTG…VFDVELVDVK (90 aa)).

This sequence belongs to the FKBP-type PPIase family. FKBP2 subfamily.

The protein localises to the endoplasmic reticulum membrane. The catalysed reaction is [protein]-peptidylproline (omega=180) = [protein]-peptidylproline (omega=0). With respect to regulation, inhibited by both FK506 and rapamycin. Binds FK506 with 15-fold lower affinity than FKB1. Its function is as follows. PPIases accelerate the folding of proteins. It catalyzes the cis-trans isomerization of proline imidic peptide bonds in oligopeptides. FKBP-13 may play a role in protein trafficking in the ER. The polypeptide is Peptidyl-prolyl cis-trans isomerase FPR2 (FPR2) (Saccharomyces cerevisiae (strain ATCC 204508 / S288c) (Baker's yeast)).